We begin with the raw amino-acid sequence, 586 residues long: Aspartate--tRNA(Asp/Asn) ligase (586 aa).

Glu-172 serves as a coordination point for L-aspartate. The tract at residues 196–199 is aspartate; the sequence is QLYK. Residue Arg-218 participates in L-aspartate binding. ATP contacts are provided by residues 218-220 and Gln-227; that span reads RDE. His-446 is an L-aspartate binding site. Position 480 (Glu-480) interacts with ATP. Arg-487 contributes to the L-aspartate binding site. ATP is bound at residue 532 to 535; the sequence is GIDR.

Belongs to the class-II aminoacyl-tRNA synthetase family. Type 1 subfamily. Homodimer.

The protein resides in the cytoplasm. The catalysed reaction is tRNA(Asx) + L-aspartate + ATP = L-aspartyl-tRNA(Asx) + AMP + diphosphate. In terms of biological role, aspartyl-tRNA synthetase with relaxed tRNA specificity since it is able to aspartylate not only its cognate tRNA(Asp) but also tRNA(Asn). Reaction proceeds in two steps: L-aspartate is first activated by ATP to form Asp-AMP and then transferred to the acceptor end of tRNA(Asp/Asn). This is Aspartate--tRNA(Asp/Asn) ligase from Borrelia garinii subsp. bavariensis (strain ATCC BAA-2496 / DSM 23469 / PBi) (Borreliella bavariensis).